The chain runs to 61 residues: uncharacterized protein (61 aa).

It is found in the mitochondrion. This is an uncharacterized protein from Marchantia polymorpha (Common liverwort).